We begin with the raw amino-acid sequence, 149 residues long: MGRICPVNSRARRLRARPGRPSGDSLPYHQLQGGAPRLWSPDPGRPAAYRRAHVCDVTAPRWGSTSRQGEGAVLQRMLRRRAPPSWSRDHAYSRRGWENVALFLNRKRKQEGTENTSICCRPESALACGGNLSPQFLKKVIQIQTQELW.

Residues 1–41 (MGRICPVNSRARRLRARPGRPSGDSLPYHQLQGGAPRLWSP) are disordered.

The polypeptide is Down syndrome critical region protein 9 (DSCR9) (Pan troglodytes (Chimpanzee)).